Consider the following 301-residue polypeptide: Glycine--tRNA ligase alpha subunit (301 aa).

It belongs to the class-II aminoacyl-tRNA synthetase family. As to quaternary structure, tetramer of two alpha and two beta subunits.

The protein localises to the cytoplasm. It carries out the reaction tRNA(Gly) + glycine + ATP = glycyl-tRNA(Gly) + AMP + diphosphate. The chain is Glycine--tRNA ligase alpha subunit from Glaesserella parasuis serovar 5 (strain SH0165) (Haemophilus parasuis).